Consider the following 96-residue polypeptide: Acylphosphatase (96 aa).

Positions 4-96 (RCEFLIFGKV…ESLNDFEILR (93 aa)) constitute an Acylphosphatase-like domain. Residues arginine 19 and asparagine 42 contribute to the active site.

Belongs to the acylphosphatase family.

The catalysed reaction is an acyl phosphate + H2O = a carboxylate + phosphate + H(+). In Helicobacter hepaticus (strain ATCC 51449 / 3B1), this protein is Acylphosphatase (acyP).